The primary structure comprises 306 residues: tRNA (guanine-N(7)-)-methyltransferase (306 aa).

A compositionally biased stretch (polar residues) spans 1–19; that stretch reads MSSTAPLDSKATEQITTAA. Positions 1–65 are disordered; that stretch reads MSSTAPLDSK…EASPELPSDE (65 aa). Residues Gly-121, 144-145, 180-181, and Cys-200 each bind S-adenosyl-L-methionine; these read EI and NA. Asp-203 is an active-site residue. Residue 278-280 coordinates S-adenosyl-L-methionine; the sequence is TEE.

The protein belongs to the class I-like SAM-binding methyltransferase superfamily. TrmB family. In terms of assembly, forms a complex with TRM82.

The protein resides in the nucleus. The catalysed reaction is guanosine(46) in tRNA + S-adenosyl-L-methionine = N(7)-methylguanosine(46) in tRNA + S-adenosyl-L-homocysteine. It participates in tRNA modification; N(7)-methylguanine-tRNA biosynthesis. Catalyzes the formation of N(7)-methylguanine at position 46 (m7G46) in tRNA. This Lodderomyces elongisporus (strain ATCC 11503 / CBS 2605 / JCM 1781 / NBRC 1676 / NRRL YB-4239) (Yeast) protein is tRNA (guanine-N(7)-)-methyltransferase.